The sequence spans 293 residues: Probable adenylate kinase 1, chloroplastic (293 aa).

The transit peptide at 1–26 (MAAVQRLLRASASGGAAAAAAAARRR) directs the protein to the mitochondrion. 70-75 (GVGKGT) serves as a coordination point for ATP. Residues 90–119 (ATGDLVRDELASSGPLSVQLAEIVNQGKLV) form an NMP region. AMP is bound by residues Thr-91, Arg-96, 117–119 (KLV), 147–150 (GFPR), and Gln-154. The segment at 183 to 231 (GRRICGQCGKNFNLACIDVKGENGLPPIYMAPLLPPNNCMSKLITRADD) is LID. Residues Arg-184 and 193 to 194 (NF) contribute to the ATP site. Residues Arg-228 and Arg-239 each coordinate AMP.

This sequence belongs to the adenylate kinase family.

The protein resides in the mitochondrion. The catalysed reaction is AMP + ATP = 2 ADP. In terms of biological role, catalyzes the reversible transfer of the terminal phosphate group between ATP and AMP. Plays an important role in cellular energy homeostasis and in adenine nucleotide metabolism. This chain is Probable adenylate kinase 1, chloroplastic, found in Oryza sativa subsp. japonica (Rice).